Here is a 685-residue protein sequence, read N- to C-terminus: Putative protein FAR1-RELATED SEQUENCE 10 (685 aa).

One can recognise an FAR1 domain in the interval 69–161; the sequence is EYYSTFARKS…SNVHNHELLE (93 aa). The region spanning 292-388 is the MULE domain; the sequence is VVVFDTSYRS…FMSHIVSKLA (97 aa). The SWIM-type zinc finger occupies 565-603; the sequence is GECCVIWNPENEEIQCSCKEFEHSGILCRHTLRVLTVKN.

It belongs to the FHY3/FAR1 family.

The chain is Putative protein FAR1-RELATED SEQUENCE 10 (FRS10) from Arabidopsis thaliana (Mouse-ear cress).